A 166-amino-acid polypeptide reads, in one-letter code: UPF0254 protein Maeo_0668 (166 aa).

Belongs to the UPF0254 family.

The polypeptide is UPF0254 protein Maeo_0668 (Methanococcus aeolicus (strain ATCC BAA-1280 / DSM 17508 / OCM 812 / Nankai-3)).